A 208-amino-acid chain; its full sequence is Large ribosomal subunit protein uL3 (208 aa).

Q149 is subject to N5-methylglutamine.

The protein belongs to the universal ribosomal protein uL3 family. In terms of assembly, part of the 50S ribosomal subunit. Forms a cluster with proteins L14 and L19. Post-translationally, methylated by PrmB.

Functionally, one of the primary rRNA binding proteins, it binds directly near the 3'-end of the 23S rRNA, where it nucleates assembly of the 50S subunit. This Haemophilus influenzae (strain 86-028NP) protein is Large ribosomal subunit protein uL3.